The primary structure comprises 353 residues: Holliday junction branch migration complex subunit RuvB (353 aa).

The segment at 4–185 (ADRLITAAGG…FGIVQRLEFY (182 aa)) is large ATPase domain (RuvB-L). Residues I24, R25, G66, K69, T70, T71, 132–134 (EDF), R175, Y185, and R222 contribute to the ATP site. Mg(2+) is bound at residue T70. Positions 186–256 (NIADLSTIVS…TADKALNLLD (71 aa)) are small ATPAse domain (RuvB-S). Residues 259–353 (EHGFDHQDRR…DDVVDDPADL (95 aa)) form a head domain (RuvB-H) region. R295, R314, and R319 together coordinate DNA.

It belongs to the RuvB family. As to quaternary structure, homohexamer. Forms an RuvA(8)-RuvB(12)-Holliday junction (HJ) complex. HJ DNA is sandwiched between 2 RuvA tetramers; dsDNA enters through RuvA and exits via RuvB. An RuvB hexamer assembles on each DNA strand where it exits the tetramer. Each RuvB hexamer is contacted by two RuvA subunits (via domain III) on 2 adjacent RuvB subunits; this complex drives branch migration. In the full resolvosome a probable DNA-RuvA(4)-RuvB(12)-RuvC(2) complex forms which resolves the HJ.

Its subcellular location is the cytoplasm. The enzyme catalyses ATP + H2O = ADP + phosphate + H(+). Its function is as follows. The RuvA-RuvB-RuvC complex processes Holliday junction (HJ) DNA during genetic recombination and DNA repair, while the RuvA-RuvB complex plays an important role in the rescue of blocked DNA replication forks via replication fork reversal (RFR). RuvA specifically binds to HJ cruciform DNA, conferring on it an open structure. The RuvB hexamer acts as an ATP-dependent pump, pulling dsDNA into and through the RuvAB complex. RuvB forms 2 homohexamers on either side of HJ DNA bound by 1 or 2 RuvA tetramers; 4 subunits per hexamer contact DNA at a time. Coordinated motions by a converter formed by DNA-disengaged RuvB subunits stimulates ATP hydrolysis and nucleotide exchange. Immobilization of the converter enables RuvB to convert the ATP-contained energy into a lever motion, pulling 2 nucleotides of DNA out of the RuvA tetramer per ATP hydrolyzed, thus driving DNA branch migration. The RuvB motors rotate together with the DNA substrate, which together with the progressing nucleotide cycle form the mechanistic basis for DNA recombination by continuous HJ branch migration. Branch migration allows RuvC to scan DNA until it finds its consensus sequence, where it cleaves and resolves cruciform DNA. This is Holliday junction branch migration complex subunit RuvB from Pseudomonas savastanoi pv. phaseolicola (strain 1448A / Race 6) (Pseudomonas syringae pv. phaseolicola (strain 1448A / Race 6)).